Consider the following 793-residue polypeptide: Phosphoribosylformylglycinamidine synthase subunit PurL (793 aa).

H53 is a catalytic residue. Residues Y56 and K95 each coordinate ATP. E97 is a Mg(2+) binding site. Residues 98–101 and R120 each bind substrate; that span reads SHNH. H99 serves as the catalytic Proton acceptor. A Mg(2+)-binding site is contributed by D121. Position 244 (Q244) interacts with substrate. D272 lines the Mg(2+) pocket. A substrate-binding site is contributed by 316–318; sequence ESQ. ATP-binding residues include D523 and G560. N561 contacts Mg(2+). Position 563 (S563) interacts with substrate.

Belongs to the FGAMS family. In terms of assembly, monomer. Part of the FGAM synthase complex composed of 1 PurL, 1 PurQ and 2 PurS subunits.

The protein resides in the cytoplasm. It catalyses the reaction N(2)-formyl-N(1)-(5-phospho-beta-D-ribosyl)glycinamide + L-glutamine + ATP + H2O = 2-formamido-N(1)-(5-O-phospho-beta-D-ribosyl)acetamidine + L-glutamate + ADP + phosphate + H(+). Its pathway is purine metabolism; IMP biosynthesis via de novo pathway; 5-amino-1-(5-phospho-D-ribosyl)imidazole from N(2)-formyl-N(1)-(5-phospho-D-ribosyl)glycinamide: step 1/2. In terms of biological role, part of the phosphoribosylformylglycinamidine synthase complex involved in the purines biosynthetic pathway. Catalyzes the ATP-dependent conversion of formylglycinamide ribonucleotide (FGAR) and glutamine to yield formylglycinamidine ribonucleotide (FGAM) and glutamate. The FGAM synthase complex is composed of three subunits. PurQ produces an ammonia molecule by converting glutamine to glutamate. PurL transfers the ammonia molecule to FGAR to form FGAM in an ATP-dependent manner. PurS interacts with PurQ and PurL and is thought to assist in the transfer of the ammonia molecule from PurQ to PurL. This chain is Phosphoribosylformylglycinamidine synthase subunit PurL, found in Prochlorococcus marinus (strain SARG / CCMP1375 / SS120).